A 503-amino-acid polypeptide reads, in one-letter code: Diels-Alderase cghA (503 aa).

This sequence belongs to the Diels-Alderase family.

The catalysed reaction is (2S)-3-[(2S)-3,5-dioxo-4-[(2E,4R,6R,8E,10E,12E)-4,6,12-trimethyltetradeca-2,8,10,12-tetraenoyl]pyrrolidin-2-yl]-2-hydroxy-2-methylpropanoate = sch 210972. It participates in secondary metabolite biosynthesis. Its function is as follows. Diels-Alderase; part of the gene cluster that mediates the biosynthesis of the tetramic acid Sch210972, a potential anti-HIV fungal natural product that contains a decalin core. The PKS module of cghG together with the enoylreductase cghC catalyze the formation of the polyketide unit which is then conjugated to 4-hydroxyl-4-methyl glutamate (HMG) by the condensation domain of the cghG NRPS module. One unique structural feature of Sch210972 is the tetramic acid motif proposed to be derived from the non-proteinogenic amino acid HMG, by a Dieckmann-type condensation catalyzed by the reductase domain of cghG. The aldolase cghB catalyzes the aldol condensation of 2 molecules of pyruvic acid to yield the intermediate 4-hydroxyl-4-methyl-2-oxoglutarate (HMOG), which can then be stereoselectively transaminated by an unidentified enzyme to form HMG. The Diels-Alderase cghA then uses the Dieckmann product released by cghG as substrate and catalyzes the Diels-Alder cycloaddition to form the decalin ring of Sch210972. CghA also suppresses the nonenzymatic formation of the alternative stereoisomer. The polypeptide is Diels-Alderase cghA (Chaetomium globosum (strain ATCC 6205 / CBS 148.51 / DSM 1962 / NBRC 6347 / NRRL 1970) (Soil fungus)).